A 509-amino-acid chain; its full sequence is Lysine--tRNA ligase (509 aa).

Mg(2+) contacts are provided by Glu417 and Glu424.

This sequence belongs to the class-II aminoacyl-tRNA synthetase family. In terms of assembly, homodimer. It depends on Mg(2+) as a cofactor.

The protein localises to the cytoplasm. It catalyses the reaction tRNA(Lys) + L-lysine + ATP = L-lysyl-tRNA(Lys) + AMP + diphosphate. The protein is Lysine--tRNA ligase of Blochmanniella pennsylvanica (strain BPEN).